A 43-amino-acid chain; its full sequence is Protein PsbN (43 aa).

Residues 5–27 (TLIAISISGLLVSFTGYALYTAF) traverse the membrane as a helical segment.

Belongs to the PsbN family.

The protein resides in the plastid. The protein localises to the chloroplast thylakoid membrane. Functionally, may play a role in photosystem I and II biogenesis. This is Protein PsbN from Phaseolus vulgaris (Kidney bean).